An 834-amino-acid chain; its full sequence is Probable receptor-like protein kinase At2g23200 (834 aa).

Positions 1–28 (MENFCFQDSVSLFITIMVLVLLPRLSLS) are cleaved as a signal peptide. Residues 29–405 (DTSTYTRPEN…SSSRVHIITG (377 aa)) lie on the Extracellular side of the membrane. N-linked (GlcNAc...) asparagine glycans are attached at residues asparagine 61, asparagine 149, asparagine 221, asparagine 246, asparagine 277, asparagine 289, asparagine 314, asparagine 352, asparagine 361, and asparagine 394. The chain crosses the membrane as a helical span at residues 406-426 (CAVAAAAASALVFSLLFMVFL). Over 427 to 834 (KRRRSKKTKP…FSQLKISDAR (408 aa)) the chain is Cytoplasmic. One can recognise a Protein kinase domain in the interval 488-761 (FDEQLLIGKG…RDVIWDLEYV (274 aa)). Residues 494–502 (IGKGGFGYV) and lysine 516 each bind ATP. The active-site Proton acceptor is the aspartate 613.

The protein belongs to the protein kinase superfamily. Ser/Thr protein kinase family.

It localises to the membrane. This is Probable receptor-like protein kinase At2g23200 from Arabidopsis thaliana (Mouse-ear cress).